The chain runs to 113 residues: Pancreatic progenitor cell differentiation and proliferation factor (113 aa).

The protein belongs to the PPDPF family.

Probable regulator of exocrine pancreas development. The polypeptide is Pancreatic progenitor cell differentiation and proliferation factor (ppdpf) (Xenopus tropicalis (Western clawed frog)).